The chain runs to 221 residues: Large ribosomal subunit protein uL3 (221 aa).

This sequence belongs to the universal ribosomal protein uL3 family. As to quaternary structure, part of the 50S ribosomal subunit. Forms a cluster with proteins L14 and L19.

In terms of biological role, one of the primary rRNA binding proteins, it binds directly near the 3'-end of the 23S rRNA, where it nucleates assembly of the 50S subunit. This is Large ribosomal subunit protein uL3 from Chlamydia trachomatis serovar A (strain ATCC VR-571B / DSM 19440 / HAR-13).